Reading from the N-terminus, the 387-residue chain is Polyadenylate-binding protein RBP45A (387 aa).

3 RRM domains span residues 60–140, 154–233, and 260–332; these read KSLW…WAQA, HTIF…PAAN, and TTIF…WGRS. The span at 329–342 shows a compositional bias: polar residues; it reads WGRSPNKQSDQAQW. Positions 329 to 387 are disordered; that stretch reads WGRSPNKQSDQAQWNGGGYYGYPPQPQGGYGYAAQPPTQDPNAYYGGYTGYGNYQQQRQ.

The protein belongs to the polyadenylate-binding RBP45 family. As to quaternary structure, interacts with the poly(A) tail of mRNA in nucleus. Mostly expressed in seedlings, and, to a lower extent, in leaves, stems, and flowers. Present in immature anther tissues (tapetum cells) and mature pollen grains.

It localises to the nucleus. In terms of biological role, heterogeneous nuclear ribonucleoprotein (hnRNP)-protein binding the poly(A) tail of mRNA and probably involved in some steps of pre-mRNA maturation. This chain is Polyadenylate-binding protein RBP45A (RBP45A), found in Arabidopsis thaliana (Mouse-ear cress).